The primary structure comprises 1177 residues: DNA-directed RNA polymerase subunit beta (1177 aa).

Over residues 1147–1161 the composition is skewed to acidic residues; the sequence is DDTEIEMRDTEDDDD. The segment at 1147–1177 is disordered; sequence DDTEIEMRDTEDDDDHQSADKLNVEVETTKE. The segment covering 1162-1177 has biased composition (basic and acidic residues); that stretch reads HQSADKLNVEVETTKE.

It belongs to the RNA polymerase beta chain family. As to quaternary structure, the RNAP catalytic core consists of 2 alpha, 1 beta, 1 beta' and 1 omega subunit. When a sigma factor is associated with the core the holoenzyme is formed, which can initiate transcription.

It catalyses the reaction RNA(n) + a ribonucleoside 5'-triphosphate = RNA(n+1) + diphosphate. Functionally, DNA-dependent RNA polymerase catalyzes the transcription of DNA into RNA using the four ribonucleoside triphosphates as substrates. This is DNA-directed RNA polymerase subunit beta from Bacillus cereus (strain G9842).